The primary structure comprises 248 residues: MWLGVITLFPEMFRAVTDFGVTGRAVKNGLLEVQTWNPRDFTHDRHNTVDDRPYGGGPGMLMMVQPLRDAIHAAKAAAGDRAKVIYLSPQGRKLDQHGVTELAKSECLILVCGRYEGVDERIIQTEVDEEWSIGDYVLSGGELPAMTLIDSVARLVPGVLGKQASAEQDSFSDGLLDCPHYTRPEQLDGLDVPAVLLSGDHEKIRLWRLQQSIGRTFLRRPELFENLALTDEQTTLLAQFVNETDKSA.

S-adenosyl-L-methionine is bound by residues Gly-113 and 133–138; that span reads IGDYVL.

It belongs to the RNA methyltransferase TrmD family. In terms of assembly, homodimer.

The protein localises to the cytoplasm. It catalyses the reaction guanosine(37) in tRNA + S-adenosyl-L-methionine = N(1)-methylguanosine(37) in tRNA + S-adenosyl-L-homocysteine + H(+). Functionally, specifically methylates guanosine-37 in various tRNAs. The sequence is that of tRNA (guanine-N(1)-)-methyltransferase from Shewanella frigidimarina (strain NCIMB 400).